We begin with the raw amino-acid sequence, 72 residues long: Large ribosomal subunit protein eL40 (72 aa).

This sequence belongs to the eukaryotic ribosomal protein eL40 family.

This is Large ribosomal subunit protein eL40 from Nicotiana tabacum (Common tobacco).